The primary structure comprises 124 residues: uncharacterized protein (124 aa).

As to quaternary structure, interacts with dil1.

This is an uncharacterized protein from Schizosaccharomyces pombe (strain 972 / ATCC 24843) (Fission yeast).